The sequence spans 468 residues: uncharacterized protein (468 aa).

Coiled coils occupy residues 10–94 (NEAL…VKEL) and 147–279 (FVEL…EASI). The tract at residues 324-369 (TPRTVDPIPEGTIIKKESSDDAMFSGLKKSKPKKSNKSNNNQADSD) is disordered. Residue S342 is modified to Phosphoserine. Residues 399-445 (VEQLKSRIAHFKEQQDSVTKQRIEKAKQEIEKLEAKYNSKEEKTLTE) are a coiled coil.

It is found in the cytoplasm. This is an uncharacterized protein from Schizosaccharomyces pombe (strain 972 / ATCC 24843) (Fission yeast).